We begin with the raw amino-acid sequence, 974 residues long: Isoleucine--tRNA ligase (974 aa).

Positions 69 to 79 (PYANGALHMGH) match the 'HIGH' region motif. Position 585 (E585) interacts with L-isoleucyl-5'-AMP. The 'KMSKS' region motif lies at 626–630 (KMSKS). Residue K629 coordinates ATP. The Zn(2+) site is built by C939, C942, C959, and C962.

Belongs to the class-I aminoacyl-tRNA synthetase family. IleS type 1 subfamily. In terms of assembly, monomer. It depends on Zn(2+) as a cofactor.

It localises to the cytoplasm. It carries out the reaction tRNA(Ile) + L-isoleucine + ATP = L-isoleucyl-tRNA(Ile) + AMP + diphosphate. Catalyzes the attachment of isoleucine to tRNA(Ile). As IleRS can inadvertently accommodate and process structurally similar amino acids such as valine, to avoid such errors it has two additional distinct tRNA(Ile)-dependent editing activities. One activity is designated as 'pretransfer' editing and involves the hydrolysis of activated Val-AMP. The other activity is designated 'posttransfer' editing and involves deacylation of mischarged Val-tRNA(Ile). This chain is Isoleucine--tRNA ligase, found in Parasynechococcus marenigrum (strain WH8102).